Here is an 83-residue protein sequence, read N- to C-terminus: Beta-defensin 119 (83 aa).

An N-terminal signal peptide occupies residues 1 to 20; that stretch reads MKFLFLFLAILLAMEPVVSG. Disulfide bonds link cysteine 27–cysteine 54, cysteine 34–cysteine 48, and cysteine 38–cysteine 55.

It belongs to the beta-defensin family.

The protein localises to the secreted. Has antibacterial activity. The protein is Beta-defensin 119 (DEFB119) of Bos taurus (Bovine).